The chain runs to 376 residues: MAKQDYYEILGVSKTAEEREIKKAYKRLAMKYHPDRNQGDKEAEAKFKEIKEAYEVLTDSQKRAAYDQYGHAAFEQGGMGGGGFGGGADFSDIFGDVFGDIFGGGRGRQRAARGADLRYNMELTLEEAVRGVTKEIRIPTLEECDVCHGSGAKPGTQPQTCPTCHGSGQVQMRQGFFAVQQTCPHCQGRGTLIKDPCNKCHGHGRVERSKTLSVKIPAGVDTGDRIRLAGEGEAGQHGAPAGDLYVQVQVKQHPIFEREGNNLYCEVPINFAMAALGGEIEVPTLDGRVKLKVPGETQTGKLFRMRGKGVKSVRGGAQGDLLCRVVVETPVGLNEKQKQLLQELQESFGGPTGEHNSPRSKSFFDGVKKFFDDLTR.

In terms of domain architecture, J spans 5–70; that stretch reads DYYEILGVSK…QKRAAYDQYG (66 aa). A CR-type zinc finger spans residues 131–209; it reads GVTKEIRIPT…CHGHGRVERS (79 aa). Cys-144, Cys-147, Cys-161, Cys-164, Cys-183, Cys-186, Cys-197, and Cys-200 together coordinate Zn(2+). CXXCXGXG motif repeat units lie at residues 144–151, 161–168, 183–190, and 197–204; these read CDVCHGSG, CPTCHGSG, CPHCQGRG, and CNKCHGHG.

It belongs to the DnaJ family. As to quaternary structure, homodimer. The cofactor is Zn(2+).

It is found in the cytoplasm. Functionally, participates actively in the response to hyperosmotic and heat shock by preventing the aggregation of stress-denatured proteins and by disaggregating proteins, also in an autonomous, DnaK-independent fashion. Unfolded proteins bind initially to DnaJ; upon interaction with the DnaJ-bound protein, DnaK hydrolyzes its bound ATP, resulting in the formation of a stable complex. GrpE releases ADP from DnaK; ATP binding to DnaK triggers the release of the substrate protein, thus completing the reaction cycle. Several rounds of ATP-dependent interactions between DnaJ, DnaK and GrpE are required for fully efficient folding. Also involved, together with DnaK and GrpE, in the DNA replication of plasmids through activation of initiation proteins. The chain is Chaperone protein DnaJ from Shigella boydii serotype 18 (strain CDC 3083-94 / BS512).